A 783-amino-acid polypeptide reads, in one-letter code: Probable galactinol--sucrose galactosyltransferase 5 (783 aa).

Phosphoserine is present on residues serine 9 and serine 11.

It belongs to the glycosyl hydrolases 36 family.

The catalysed reaction is alpha-D-galactosyl-(1-&gt;3)-1D-myo-inositol + sucrose = raffinose + myo-inositol. Its function is as follows. Transglycosidase operating by a ping-pong reaction mechanism. Involved in the synthesis of raffinose, a major soluble carbohydrate in seeds, roots and tubers. The polypeptide is Probable galactinol--sucrose galactosyltransferase 5 (RFS5) (Arabidopsis thaliana (Mouse-ear cress)).